Reading from the N-terminus, the 3396-residue chain is Versican core protein (3396 aa).

The first 20 residues, 1–20 (MFINIKSILWMCSTLIVTHA), serve as a signal peptide directing secretion. An Ig-like V-type domain is found at 21–146 (LHKVKVGKSP…EDTQDTVSLT (126 aa)). 5 disulfides stabilise this stretch: cysteine 44-cysteine 130, cysteine 172-cysteine 243, cysteine 196-cysteine 217, cysteine 270-cysteine 345, and cysteine 294-cysteine 315. Asparagine 57 carries an N-linked (GlcNAc...) asparagine glycan. 2 Link domains span residues 150 to 245 (VVFH…YCYV) and 251 to 347 (DVFH…YCFK). Asparagine 330 is a glycosylation site (N-linked (GlcNAc...) asparagine). The segment at 348-1335 (PKEATTIDLS…IIEVRENKTG (988 aa)) is GAG-alpha (glucosaminoglycan attachment domain). Positions 420-430 (ATKLPTPTGST) are enriched in polar residues. Disordered stretches follow at residues 420 to 439 (ATKL…MDDY) and 603 to 622 (STTV…MDDW). Asparagine 615 carries N-linked (GlcNAc...) asparagine glycosylation. Serine 659 carries an O-linked (Xyl...) (chondroitin sulfate) serine glycan. N-linked (GlcNAc...) asparagine glycans are attached at residues asparagine 782 and asparagine 809. 3 disordered regions span residues 807-829 (EDNT…LPPA), 1126-1154 (IGPK…TSSL), and 1277-1316 (REYF…PAST). Residues 811-824 (TSKPLESTEPSASS) are compositionally biased toward polar residues. The segment covering 1143–1154 (EGSSTTGFTSSL) has biased composition (low complexity). Asparagine 1332 and asparagine 1398 each carry an N-linked (GlcNAc...) asparagine glycan. Residues 1336 to 3089 (RMSDLSVIGH…VEGTAIYLPG (1754 aa)) are GAG-beta. Disordered stretches follow at residues 1420–1497 (VPKD…SGGE) and 1510–1539 (FESG…HTEP). Residues 1422–1433 (KDPEAAEARRGQ) show a composition bias toward basic and acidic residues. N-linked (GlcNAc...) asparagine glycosylation is found at asparagine 1442 and asparagine 1468. Over residues 1469-1480 (ESTETTESLEVT) the composition is skewed to low complexity. The span at 1517–1538 (KGAESVTERDTEVGHQAHEHTE) shows a compositional bias: basic and acidic residues. O-linked (Xyl...) (chondroitin sulfate) serine glycans are attached at residues serine 1548 and serine 1631. N-linked (GlcNAc...) asparagine glycosylation is present at asparagine 1663. Disordered stretches follow at residues 1717–1737 (STTV…TAST) and 1759–1789 (PNVA…MTDS). Over residues 1720–1729 (VEEKKRKEEE) the composition is skewed to basic and acidic residues. Polar residues predominate over residues 1760–1781 (NVATSSDSGTRKSFMSLTTPTQ). Residue asparagine 1898 is glycosylated (N-linked (GlcNAc...) asparagine). O-linked (Xyl...) (chondroitin sulfate) serine glycans are attached at residues serine 1935 and serine 1959. Disordered stretches follow at residues 1962–1994 (AAFR…STMV), 2107–2134 (RQEI…NSPA), and 2168–2188 (KEMK…PDAN). Residues 1969-1978 (TSPSTVPTSV) show a composition bias toward low complexity. Residues 2111–2120 (ESETTSEEQI) are compositionally biased toward acidic residues. A Phosphoserine; by FAM20C modification is found at serine 2116. An N-linked (GlcNAc...) asparagine glycan is attached at asparagine 2179. 2 O-linked (Xyl...) (chondroitin sulfate) serine glycosylation sites follow: serine 2247 and serine 2254. 5 N-linked (GlcNAc...) asparagine glycosylation sites follow: asparagine 2272, asparagine 2280, asparagine 2360, asparagine 2385, and asparagine 2392. Disordered regions lie at residues 2371 to 2396 (TSRP…ETTT), 2445 to 2473 (SATT…EVPS), 2493 to 2518 (SEQN…STDG), and 2598 to 2617 (DTEV…DDST). 2 stretches are compositionally biased toward polar residues: residues 2445-2461 (SATT…TFVS) and 2496-2513 (NKSS…VSYE). N-linked (GlcNAc...) asparagine glycosylation is present at asparagine 2496. Serine 2608 is modified (phosphoserine). Threonine 2617 carries the post-translational modification Phosphothreonine. Asparagine 2628 is a glycosylation site (N-linked (GlcNAc...) asparagine). Serine 2722, serine 2723, and serine 2767 each carry an O-linked (Xyl...) (chondroitin sulfate) serine glycan. 2 disordered regions span residues 2834 to 2856 (GSEA…DVGS) and 2881 to 2905 (EEYL…EDDG). The span at 2896-2905 (TKLEPSEDDG) shows a compositional bias: basic and acidic residues. Residue asparagine 2934 is glycosylated (N-linked (GlcNAc...) asparagine). The O-linked (Xyl...) (chondroitin sulfate) serine glycan is linked to serine 2941. Asparagine 3067 carries N-linked (GlcNAc...) asparagine glycosylation. In terms of domain architecture, EGF-like 1 spans 3089–3125 (GPDRCKMNPCLNGGTCYPTETSYVCTCVPGYSGDQCE). Intrachain disulfides connect cysteine 3093–cysteine 3104, cysteine 3098–cysteine 3113, cysteine 3115–cysteine 3124, cysteine 3131–cysteine 3142, cysteine 3136–cysteine 3151, cysteine 3153–cysteine 3162, cysteine 3169–cysteine 3180, cysteine 3197–cysteine 3289, cysteine 3265–cysteine 3281, cysteine 3296–cysteine 3339, and cysteine 3325–cysteine 3352. The 37-residue stretch at 3127–3163 (DFDECHSNPCRNGATCVDGFNTFRCLCLPSYVGALCE) folds into the EGF-like 2; calcium-binding domain. Residues 3176 to 3290 (FQGQCYKYFA…CNYHLTYTCK (115 aa)) enclose the C-type lectin domain. Residues 3294-3354 (VACGQPPVVE…WAIPKITCMN (61 aa)) form the Sushi domain. N-linked (GlcNAc...) asparagine glycosylation is found at asparagine 3369 and asparagine 3379. Polar residues predominate over residues 3371–3380 (SSAKDNSINT). Residues 3371–3396 (SSAKDNSINTSKHDHRWSRRWQESRR) are disordered.

This sequence belongs to the aggrecan/versican proteoglycan family. In terms of assembly, interacts with FBLN1. Phosphorylated by FAM20C in the extracellular medium. Post-translationally, proteolytically cleaved by ADAMTS5 and ADAMTS15 in the pericellular matrix surrounding myoblasts, facilitating myoblast contact and fusion which is required for skeletal muscle development and regeneration. Detected in placenta (at protein level). Detected in cerebrospinal fluid, fibroblasts and urine (at protein level). Expressed in the retina (at protein level). Cerebral white matter and plasma. Isoform V0: Expressed in normal brain, gliomas, medulloblastomas, schwannomas, neurofibromas, and meningiomas. Isoform V1: Expressed in normal brain, gliomas, medulloblastomas, schwannomas, neurofibromas, and meningiomas. Isoform V2: Restricted to normal brain and gliomas. Isoform V3: Found in all these tissues except medulloblastomas.

The protein resides in the secreted. It is found in the extracellular space. Its subcellular location is the extracellular matrix. It localises to the cell projection. The protein localises to the cilium. The protein resides in the photoreceptor outer segment. It is found in the interphotoreceptor matrix. May play a role in intercellular signaling and in connecting cells with the extracellular matrix. May take part in the regulation of cell motility, growth and differentiation. Binds hyaluronic acid. In Homo sapiens (Human), this protein is Versican core protein (VCAN).